Here is a 134-residue protein sequence, read N- to C-terminus: 6,7-dimethyl-8-ribityllumazine synthase (134 aa).

Residues Phe12, 44 to 46, and 68 to 70 each bind 5-amino-6-(D-ribitylamino)uracil; these read VFD and SVI. Position 73–74 (73–74) interacts with (2S)-2-hydroxy-3-oxobutyl phosphate; that stretch reads ET. His76 functions as the Proton donor in the catalytic mechanism. Residue Leu101 coordinates 5-amino-6-(D-ribitylamino)uracil. Arg116 contributes to the (2S)-2-hydroxy-3-oxobutyl phosphate binding site.

The protein belongs to the DMRL synthase family.

It carries out the reaction (2S)-2-hydroxy-3-oxobutyl phosphate + 5-amino-6-(D-ribitylamino)uracil = 6,7-dimethyl-8-(1-D-ribityl)lumazine + phosphate + 2 H2O + H(+). Its pathway is cofactor biosynthesis; riboflavin biosynthesis; riboflavin from 2-hydroxy-3-oxobutyl phosphate and 5-amino-6-(D-ribitylamino)uracil: step 1/2. Its function is as follows. Catalyzes the formation of 6,7-dimethyl-8-ribityllumazine by condensation of 5-amino-6-(D-ribitylamino)uracil with 3,4-dihydroxy-2-butanone 4-phosphate. This is the penultimate step in the biosynthesis of riboflavin. This Methanosarcina acetivorans (strain ATCC 35395 / DSM 2834 / JCM 12185 / C2A) protein is 6,7-dimethyl-8-ribityllumazine synthase.